A 184-amino-acid chain; its full sequence is Threonylcarbamoyl-AMP synthase (184 aa).

A YrdC-like domain is found at 1 to 184 (MNNLLAVIEL…IFTQHIFRQG (184 aa)).

The protein belongs to the SUA5 family. TsaC subfamily.

It is found in the cytoplasm. The enzyme catalyses L-threonine + hydrogencarbonate + ATP = L-threonylcarbamoyladenylate + diphosphate + H2O. In terms of biological role, required for the formation of a threonylcarbamoyl group on adenosine at position 37 (t(6)A37) in tRNAs that read codons beginning with adenine. Catalyzes the conversion of L-threonine, HCO(3)(-)/CO(2) and ATP to give threonylcarbamoyl-AMP (TC-AMP) as the acyladenylate intermediate, with the release of diphosphate. The sequence is that of Threonylcarbamoyl-AMP synthase from Haemophilus ducreyi (strain 35000HP / ATCC 700724).